Here is a 44-residue protein sequence, read N- to C-terminus: ESGNSCYIYHGVSGICKASCAEDEKAMAGMGVCEGHLCCYKTPW.

3 disulfides stabilise this stretch: C6–C38, C16–C33, and C20–C39. The segment at 7–10 (YIYH) is inhibitory motif.

Belongs to the sea anemone alpha-amylase inhibitor family.

The protein localises to the secreted. Specific pancreatic alpha-amylase (AMY2A) inhibitor. The recombinant peptide inhibits human pancreatic (Ki=0.01 nM) and porcine pancreatic alpha-amylases (Ki=0.1 nM). The polypeptide is Alpha-amylase inhibitor helianthamide (Stichodactyla helianthus (Sun anemone)).